A 267-amino-acid chain; its full sequence is Tetrahydromethanopterin S-methyltransferase subunit C (267 aa).

7 helical membrane-spanning segments follow: residues 19 to 39, 75 to 95, 97 to 117, 140 to 160, 162 to 182, 198 to 218, and 221 to 241; these read IMAL…FAPP, IGML…SVGG, AGPI…GALA, TLVI…ASVV, YVVA…GILH, LMLA…ASSL, and GLMA…VAFS.

This sequence belongs to the MtrC family. The complex is composed of 8 subunits; MtrA, MtrB, MtrC, MtrD, MtrE, MtrF, MtrG and MtrH.

Its subcellular location is the cell membrane. It carries out the reaction 5-methyl-5,6,7,8-tetrahydromethanopterin + coenzyme M + 2 Na(+)(in) = 5,6,7,8-tetrahydromethanopterin + methyl-coenzyme M + 2 Na(+)(out). It participates in one-carbon metabolism; methanogenesis from CO(2); methyl-coenzyme M from 5,10-methylene-5,6,7,8-tetrahydromethanopterin: step 2/2. Functionally, part of a complex that catalyzes the formation of methyl-coenzyme M and tetrahydromethanopterin from coenzyme M and methyl-tetrahydromethanopterin. This is an energy-conserving, sodium-ion translocating step. In Methanosarcina barkeri (strain Fusaro / DSM 804), this protein is Tetrahydromethanopterin S-methyltransferase subunit C.